The chain runs to 363 residues: Cyanide hydratase (363 aa).

A CN hydrolase domain is found at Tyr-6 to Leu-285. Glu-46 (proton acceptor) is an active-site residue. Residue Lys-128 is part of the active site. Cys-163 functions as the Nucleophile in the catalytic mechanism.

It belongs to the carbon-nitrogen hydrolase superfamily. Nitrilase family. In terms of assembly, oligomer of dimers, forming left-handed helical fibers.

The catalysed reaction is formamide = hydrogen cyanide + H2O. In terms of biological role, catalyzes the hydration of cyanide to formamide. Degradation of cyanide may be important for plant pathogenic fungi in infection of cyanogenic plants. The polypeptide is Cyanide hydratase (CyhAB) (Alternaria brassicicola (Dark leaf spot agent)).